A 166-amino-acid chain; its full sequence is Protein SprT (166 aa).

The region spanning 21-160 is the SprT-like domain; it reads ANQHFSREFP…CQQCQQTLAF (140 aa). His-74 is a binding site for Zn(2+). Residue Glu-75 is part of the active site. Residue His-78 coordinates Zn(2+).

This sequence belongs to the SprT family. It depends on Zn(2+) as a cofactor.

The protein localises to the cytoplasm. In Vibrio atlanticus (strain LGP32) (Vibrio splendidus (strain Mel32)), this protein is Protein SprT.